The sequence spans 270 residues: Putative pyruvate, phosphate dikinase regulatory protein (270 aa).

ADP is bound at residue 148–155 (GISRTSKT).

Belongs to the pyruvate, phosphate/water dikinase regulatory protein family. PDRP subfamily.

It catalyses the reaction N(tele)-phospho-L-histidyl/L-threonyl-[pyruvate, phosphate dikinase] + ADP = N(tele)-phospho-L-histidyl/O-phospho-L-threonyl-[pyruvate, phosphate dikinase] + AMP + H(+). It carries out the reaction N(tele)-phospho-L-histidyl/O-phospho-L-threonyl-[pyruvate, phosphate dikinase] + phosphate + H(+) = N(tele)-phospho-L-histidyl/L-threonyl-[pyruvate, phosphate dikinase] + diphosphate. Bifunctional serine/threonine kinase and phosphorylase involved in the regulation of the pyruvate, phosphate dikinase (PPDK) by catalyzing its phosphorylation/dephosphorylation. The polypeptide is Putative pyruvate, phosphate dikinase regulatory protein (Bacillus mycoides (strain KBAB4) (Bacillus weihenstephanensis)).